Reading from the N-terminus, the 236-residue chain is 2-C-methyl-D-erythritol 4-phosphate cytidylyltransferase (236 aa).

It belongs to the IspD/TarI cytidylyltransferase family. IspD subfamily.

The catalysed reaction is 2-C-methyl-D-erythritol 4-phosphate + CTP + H(+) = 4-CDP-2-C-methyl-D-erythritol + diphosphate. The protein operates within isoprenoid biosynthesis; isopentenyl diphosphate biosynthesis via DXP pathway; isopentenyl diphosphate from 1-deoxy-D-xylulose 5-phosphate: step 2/6. Catalyzes the formation of 4-diphosphocytidyl-2-C-methyl-D-erythritol from CTP and 2-C-methyl-D-erythritol 4-phosphate (MEP). This chain is 2-C-methyl-D-erythritol 4-phosphate cytidylyltransferase, found in Burkholderia cenocepacia (strain ATCC BAA-245 / DSM 16553 / LMG 16656 / NCTC 13227 / J2315 / CF5610) (Burkholderia cepacia (strain J2315)).